The following is a 348-amino-acid chain: Secreted frizzled-related protein 4 (348 aa).

Positions 1–18 (MLLSILVALCLCVRLALG) are cleaved as a signal peptide. Residues 19 to 139 (VRGAPCEAVR…VYDRGVCISP (121 aa)) enclose the FZ domain. Cystine bridges form between cysteine 24/cysteine 85, cysteine 32/cysteine 78, cysteine 69/cysteine 108, cysteine 97/cysteine 136, and cysteine 101/cysteine 125. 2 N-linked (GlcNAc...) asparagine glycosylation sites follow: asparagine 38 and asparagine 68. Asparagine 116, asparagine 194, and asparagine 240 each carry an N-linked (GlcNAc...) asparagine glycan. The NTR domain occupies 178 to 296 (CKCKKVKPTL…WEERLQEQQR (119 aa)). Basic and acidic residues predominate over residues 289–303 (ERLQEQQRTTQDKKQ). The disordered stretch occupies residues 289 to 348 (ERLQEQQRTTQDKKQIASRTSRSNPPKPKGRSPASKPASPKKNIKARSAPKKSNPKKSTS). A compositionally biased stretch (basic residues) spans 330–348 (KNIKARSAPKKSNPKKSTS).

The protein belongs to the secreted frizzled-related protein (sFRP) family. As to expression, expressed in the involuting mammary gland, ovarian corpus luteum and prostate. In ovaries, low levels found in granulosa cells. High levels in corpora lutea of pregnant animals.

It is found in the secreted. Soluble frizzled-related proteins (sFRPS) function as modulators of Wnt signaling through direct interaction with Wnts. They have a role in regulating cell growth and differentiation in specific cell types. SFRP4 plays a role in bone morphogenesis. May also act as a regulator of adult uterine morphology and function. May also increase apoptosis during ovulation possibly through modulation of FZ1/FZ4/WNT4 signaling. Has phosphaturic effects by specifically inhibiting sodium-dependent phosphate uptake. The sequence is that of Secreted frizzled-related protein 4 (Sfrp4) from Rattus norvegicus (Rat).